Consider the following 90-residue polypeptide: RNA-binding protein Hfq (90 aa).

Residues 9–68 enclose the Sm domain; it reads DPFLNALRRERVPVSIYLVNGIKLQGQVESFDQFVILLKNTVSQMVYKHAISTVVPARPF. Residues 71 to 90 form a disordered region; that stretch reads TGHQNAQGGYGPQDDVPSGE.

It belongs to the Hfq family. In terms of assembly, homohexamer.

Functionally, RNA chaperone that binds small regulatory RNA (sRNAs) and mRNAs to facilitate mRNA translational regulation in response to envelope stress, environmental stress and changes in metabolite concentrations. Also binds with high specificity to tRNAs. In Shewanella putrefaciens (strain CN-32 / ATCC BAA-453), this protein is RNA-binding protein Hfq.